The following is a 216-amino-acid chain: FGFR1 oncogene partner 2 homolog (216 aa).

2 coiled-coil regions span residues 33 to 102 (TTTL…LIMS) and 131 to 185 (SKEL…ITRA). A disordered region spans residues 193 to 216 (EDAAESSSHSASSVPNTDLSLRKS). The span at 206 to 216 (VPNTDLSLRKS) shows a compositional bias: polar residues.

This sequence belongs to the SIKE family.

The protein resides in the cytoplasm. The polypeptide is FGFR1 oncogene partner 2 homolog (fgfr1op2) (Xenopus tropicalis (Western clawed frog)).